The following is a 201-amino-acid chain: Proteasome subunit beta 1 (201 aa).

Residue Met-1 is a propeptide, removed in mature form; by autocatalysis. The active-site Nucleophile is Thr-2.

It belongs to the peptidase T1B family. As to quaternary structure, the 20S proteasome core is composed of 14 alpha and 14 beta subunits that assemble into four stacked heptameric rings, resulting in a barrel-shaped structure. The two inner rings, each composed of seven catalytic beta subunits, are sandwiched by two outer rings, each composed of seven alpha subunits. The catalytic chamber with the active sites is on the inside of the barrel. Has a gated structure, the ends of the cylinder being occluded by the N-termini of the alpha-subunits. Is capped at one or both ends by the proteasome regulatory ATPase, PAN.

It localises to the cytoplasm. The enzyme catalyses Cleavage of peptide bonds with very broad specificity.. With respect to regulation, the formation of the proteasomal ATPase PAN-20S proteasome complex, via the docking of the C-termini of PAN into the intersubunit pockets in the alpha-rings, triggers opening of the gate for substrate entry. Interconversion between the open-gate and close-gate conformations leads to a dynamic regulation of the 20S proteasome proteolysis activity. Component of the proteasome core, a large protease complex with broad specificity involved in protein degradation. The polypeptide is Proteasome subunit beta 1 (Pyrobaculum neutrophilum (strain DSM 2338 / JCM 9278 / NBRC 100436 / V24Sta) (Thermoproteus neutrophilus)).